The following is a 124-amino-acid chain: Fluoride-specific ion channel FluC (124 aa).

A run of 4 helical transmembrane segments spans residues 4–24, 35–55, 60–80, and 102–122; these read LLLV…ISIF, FGTL…YALG, ISPE…TTFS, and VVLN…LVFS. Na(+) contacts are provided by glycine 74 and threonine 77.

It belongs to the fluoride channel Fluc/FEX (TC 1.A.43) family.

The protein localises to the cell inner membrane. The enzyme catalyses fluoride(in) = fluoride(out). Its activity is regulated as follows. Na(+) is not transported, but it plays an essential structural role and its presence is essential for fluoride channel function. Its function is as follows. Fluoride-specific ion channel. Important for reducing fluoride concentration in the cell, thus reducing its toxicity. The sequence is that of Fluoride-specific ion channel FluC from Shewanella baltica (strain OS185).